A 170-amino-acid chain; its full sequence is Peptidyl-prolyl cis-trans isomerase ESS1 (170 aa).

The region spanning threonine 9–glycine 43 is the WW domain. The segment at asparagine 30–leucine 53 is disordered. The segment covering glutamate 32–leucine 53 has biased composition (basic and acidic residues). The PpiC domain occupies proline 57–glycine 170. At serine 161 the chain carries Phosphoserine.

This sequence belongs to the PpiC/parvulin rotamase family. In terms of assembly, interacts with the RNA polymerase II largest subunit (RPB1) and with the SIN1-RDP3 HDAC subunit SIN3.

It is found in the cytoplasm. Its subcellular location is the nucleus. It catalyses the reaction [protein]-peptidylproline (omega=180) = [protein]-peptidylproline (omega=0). With respect to regulation, inhibited by 5-hydroxy-1,4-naphthoquinone (juglone), but not by FK506 or cyclosporin A. Its function is as follows. Essential PPIase specific for phosphoserine and phosphothreonine N-terminal to the proline residue. Required for efficient pre-mRNA 3'-end processing and transcription termination, probably by inducing conformational changes by proline-directed isomerization in the C-terminal domain (CTD) of RPB1, thereby altering cofactor binding with the RNA polymerase II transcription complex. Also targets the SIN3-RPD3 histone deacetylase complex (HDAC). The polypeptide is Peptidyl-prolyl cis-trans isomerase ESS1 (ESS1) (Saccharomyces cerevisiae (strain ATCC 204508 / S288c) (Baker's yeast)).